A 92-amino-acid chain; its full sequence is Regakine-1 (92 aa).

The first 21 residues, 1 to 21 (MRVSLAALAFLLTLAVLHSEA), serve as a signal peptide directing secretion. Cystine bridges form between C32/C56 and C33/C72.

Belongs to the intercrine beta (chemokine CC) family. Plasma serum.

It localises to the secreted. In terms of biological role, chemotactic activity for neutrophils and lymphocytes. Binds to heparin. This is Regakine-1 from Bos taurus (Bovine).